The following is a 101-amino-acid chain: PAT complex subunit Asterix (101 aa).

Residues 1–26 (MADPRRPARVTRYKPPTTESNPALED) form a disordered region. The Cytoplasmic segment spans residues 1-27 (MADPRRPARVTRYKPPTTESNPALEDP). The chain crosses the membrane as a helical span at residues 28 to 46 (TPDYMNLLGMVFSMCGLML). A topological domain (lumenal) is located at residue Lys47. The helical transmembrane segment at 48–65 (LKWCAWIAVYCSFISFAN) threads the bilayer. The Cytoplasmic portion of the chain corresponds to 66–69 (SRSS). A helical transmembrane segment spans residues 70–90 (EDTKQMMSSFMLSISAVVMSY). Topologically, residues 91–101 (LQNPQPMSPPW) are lumenal.

Belongs to the Asterix family. In terms of assembly, component of the multi-pass translocon (MPT) complex.

The protein localises to the endoplasmic reticulum membrane. Its function is as follows. Component of the multi-pass translocon (MPT) complex that mediates insertion of multi-pass membrane proteins into the lipid bilayer of membranes. The MPT complex takes over after the SEC61 complex: following membrane insertion of the first few transmembrane segments of proteins by the SEC61 complex, the MPT complex occludes the lateral gate of the SEC61 complex to promote insertion of subsequent transmembrane regions. The protein is PAT complex subunit Asterix (WDR83OS) of Gallus gallus (Chicken).